Reading from the N-terminus, the 388-residue chain is Gastricsin (388 aa).

The signal sequence occupies residues 1 to 16; the sequence is MKWMVVAFICLQLLEA. Residues 17–59 constitute a propeptide, activation peptide; sequence TVVKVPLKKFKSIRETMKEKGLLWEFLKTHKHDPARKYRVSDL. Residues 73–385 enclose the Peptidase A1 domain; the sequence is YFGEISIGTP…DLGNNRVGFA (313 aa). Residue D91 is part of the active site. Disulfide bonds link C104–C109 and C267–C271. D276 is a catalytic residue. An intrachain disulfide couples C310 to C343.

It belongs to the peptidase A1 family.

It is found in the secreted. It catalyses the reaction More restricted specificity than pepsin A, but shows preferential cleavage at Tyr-|-Xaa bonds. High activity on hemoglobin.. Its activity is regulated as follows. Inhibited by pepstatin. In terms of biological role, hydrolyzes a variety of proteins. This chain is Gastricsin (PGC), found in Callithrix jacchus (White-tufted-ear marmoset).